The sequence spans 596 residues: Elongation factor 4 (596 aa).

Residues 2–184 (KQIRNFSIIA…VIVAKIPPPE (183 aa)) enclose the tr-type G domain. GTP is bound by residues 14-19 (DHGKST) and 131-134 (NKID).

It belongs to the TRAFAC class translation factor GTPase superfamily. Classic translation factor GTPase family. LepA subfamily.

It localises to the cell inner membrane. It carries out the reaction GTP + H2O = GDP + phosphate + H(+). In terms of biological role, required for accurate and efficient protein synthesis under certain stress conditions. May act as a fidelity factor of the translation reaction, by catalyzing a one-codon backward translocation of tRNAs on improperly translocated ribosomes. Back-translocation proceeds from a post-translocation (POST) complex to a pre-translocation (PRE) complex, thus giving elongation factor G a second chance to translocate the tRNAs correctly. Binds to ribosomes in a GTP-dependent manner. This is Elongation factor 4 from Shewanella baltica (strain OS223).